The following is a 307-amino-acid chain: N-acetylmuramic acid 6-phosphate etherase (307 aa).

The SIS domain occupies 62–225 (VVDAFRVGGR…TTASMIRIGK (164 aa)). Glu90 acts as the Proton donor in catalysis. Residue Glu121 is part of the active site.

It belongs to the GCKR-like family. MurNAc-6-P etherase subfamily. Homodimer.

It carries out the reaction N-acetyl-D-muramate 6-phosphate + H2O = N-acetyl-D-glucosamine 6-phosphate + (R)-lactate. The protein operates within amino-sugar metabolism; 1,6-anhydro-N-acetylmuramate degradation. Its pathway is amino-sugar metabolism; N-acetylmuramate degradation. It functions in the pathway cell wall biogenesis; peptidoglycan recycling. Its function is as follows. Specifically catalyzes the cleavage of the D-lactyl ether substituent of MurNAc 6-phosphate, producing GlcNAc 6-phosphate and D-lactate. Together with AnmK, is also required for the utilization of anhydro-N-acetylmuramic acid (anhMurNAc) either imported from the medium or derived from its own cell wall murein, and thus plays a role in cell wall recycling. In Brucella anthropi (strain ATCC 49188 / DSM 6882 / CCUG 24695 / JCM 21032 / LMG 3331 / NBRC 15819 / NCTC 12168 / Alc 37) (Ochrobactrum anthropi), this protein is N-acetylmuramic acid 6-phosphate etherase.